We begin with the raw amino-acid sequence, 1372 residues long: DNA-directed RNA polymerase subunit beta' (1372 aa).

The Zn(2+) site is built by Cys-69, Cys-71, Cys-84, and Cys-87. Mg(2+) is bound by residues Asp-460, Asp-462, and Asp-464. Residues Cys-808, Cys-882, Cys-889, and Cys-892 each coordinate Zn(2+).

Belongs to the RNA polymerase beta' chain family. As to quaternary structure, the RNAP catalytic core consists of 2 alpha, 1 beta, 1 beta' and 1 omega subunit. When a sigma factor is associated with the core the holoenzyme is formed, which can initiate transcription. Requires Mg(2+) as cofactor. Zn(2+) is required as a cofactor.

It catalyses the reaction RNA(n) + a ribonucleoside 5'-triphosphate = RNA(n+1) + diphosphate. In terms of biological role, DNA-dependent RNA polymerase catalyzes the transcription of DNA into RNA using the four ribonucleoside triphosphates as substrates. The sequence is that of DNA-directed RNA polymerase subunit beta' from Rickettsia felis (strain ATCC VR-1525 / URRWXCal2) (Rickettsia azadi).